A 1458-amino-acid polypeptide reads, in one-letter code: Anaphase-promoting complex subunit 1 (1458 aa).

The disordered stretch occupies residues 186–210; sequence QSIKSSRNRRRESSFSREKNPDLTR. A compositionally biased stretch (basic and acidic residues) spans 196 to 210; that stretch reads RESSFSREKNPDLTR. PC repeat units lie at residues 873–895, 959–982, 1006–1024, and 1099–1124; these read GLLL…KLLS, AAGF…SDLK, GAIM…LEVA, and GICF…INFL.

The protein belongs to the APC1 family. The APC/C is composed of at least 13 subunits: apc1, apc2, nuc2, apc4, apc5, cut9, apc8, apc10, apc11, hcn1, apc13, apc14 and apc15.

In terms of biological role, component of the anaphase-promoting complex/cyclosome (APC/C), a cell cycle-regulated E3 ubiquitin-protein ligase complex that controls progression through mitosis and the G1 phase of the cell cycle. The APC/C is thought to confer substrate specificity and, in the presence of ubiquitin-conjugating E2 enzymes, it catalyzes the formation of protein-ubiquitin conjugates that are subsequently degraded by the 26S proteasome. Mutations to this protein prevent the exit from mitosis. This chain is Anaphase-promoting complex subunit 1 (cut4), found in Schizosaccharomyces pombe (strain 972 / ATCC 24843) (Fission yeast).